Consider the following 394-residue polypeptide: uncharacterized protein (394 aa).

Residues 7-51 (RKVIPNMPDLILRKIFDQYDYPVLCKMERVCRRWTNIINSKFRKE) form the F-box domain.

This is an uncharacterized protein from Caenorhabditis elegans.